A 300-amino-acid polypeptide reads, in one-letter code: Probable mitochondrial 2-oxodicarboxylate carrier (300 aa).

The segment at 1–20 is disordered; the sequence is MTSKGNAGNPPTPTPAPVKS. 3 Solcar repeats span residues 21–104, 114–200, and 209–295; these read QPLW…YEKQ, PTQM…IKSA, and GVLV…VMKL. 6 helical membrane passes run 27–47, 74–93, 120–140, 171–191, 209–229, and 278–298; these read LVSGGIAGVSEILVMYPLDVV, LKMYRGIVPPILVEAPKRAI, IGSGVLAGITEAFIVVPFELV, GFFKGLESTIWRHACWNGGYF, GVLVNNFIAGGLAGTFGTMLN, and LGPGGGILLVVNEFVMKLLAG.

This sequence belongs to the mitochondrial carrier (TC 2.A.29) family.

Its subcellular location is the mitochondrion inner membrane. It catalyses the reaction 2-oxoadipate(in) + 2-oxoglutarate(out) = 2-oxoadipate(out) + 2-oxoglutarate(in). It carries out the reaction hexanedioate(in) + 2-oxoglutarate(out) = hexanedioate(out) + 2-oxoglutarate(in). The enzyme catalyses L-2-aminoadipate(in) + 2-oxoglutarate(out) = L-2-aminoadipate(out) + 2-oxoglutarate(in). The catalysed reaction is glutarate(in) + 2-oxoglutarate(out) = glutarate(out) + 2-oxoglutarate(in). It catalyses the reaction 2-oxoheptanedioate(in) + 2-oxoglutarate(out) = 2-oxoheptanedioate(out) + 2-oxoglutarate(in). It carries out the reaction heptanedioate(in) + 2-oxoglutarate(out) = heptanedioate(out) + 2-oxoglutarate(in). The enzyme catalyses citrate(in) + 2-oxoglutarate(out) = citrate(out) + 2-oxoglutarate(in). In terms of biological role, transports dicarboxylates across the inner membranes of mitochondria by a counter-exchange mechanism. Can transport 2-oxoadipate (2-oxohexanedioate), 2-oxoglutarate, adipate (hexanedioate), glutarate, and to a lesser extent, pimelate (heptanedioate), 2-oxopimelate (2-oxoheptanedioate), 2-aminoadipate (2-aminohexanedioate), oxaloacetate, and citrate. Plays a central role in catabolism of lysine, hydroxylysine, and tryptophan, by transporting common metabolite intermediates (such as 2-oxoadipate) into the mitochondria, where it is converted into acetyl-CoA and can enter the citric acid (TCA) cycle. The sequence is that of Probable mitochondrial 2-oxodicarboxylate carrier (mcfT) from Dictyostelium discoideum (Social amoeba).